Here is a 218-residue protein sequence, read N- to C-terminus: Cytochrome b6 (218 aa).

The helical transmembrane segment at 35–55 (IFYCLGGITLVCFLIQFATGF) threads the bilayer. Cys38 is a heme c binding site. Heme b contacts are provided by His89 and His103. 3 helical membrane passes run 93–113 (ASMMVLMLILHVFRVYLTGGF), 119–139 (LTWITGVVMAVITVAFGVTGY), and 189–209 (LHTFVMPWLLAVFMLMHFLMI). 2 residues coordinate heme b: His190 and His205.

Belongs to the cytochrome b family. PetB subfamily. The 4 large subunits of the cytochrome b6-f complex are cytochrome b6, subunit IV (17 kDa polypeptide, PetD), cytochrome f and the Rieske protein, while the 4 small subunits are PetG, PetL, PetM and PetN. The complex functions as a dimer. Heme b is required as a cofactor. It depends on heme c as a cofactor.

Its subcellular location is the cellular thylakoid membrane. Component of the cytochrome b6-f complex, which mediates electron transfer between photosystem II (PSII) and photosystem I (PSI), cyclic electron flow around PSI, and state transitions. This chain is Cytochrome b6, found in Prochlorococcus marinus (strain NATL1A).